Here is a 73-residue protein sequence, read N- to C-terminus: UPF0352 protein HSM_0097 (73 aa).

It belongs to the UPF0352 family.

The chain is UPF0352 protein HSM_0097 from Histophilus somni (strain 2336) (Haemophilus somnus).